A 281-amino-acid chain; its full sequence is Pantothenate synthetase (281 aa).

30 to 37 (MGALHRGH) is a binding site for ATP. The Proton donor role is filled by His-37. (R)-pantoate is bound at residue Gln-61. Gln-61 provides a ligand contact to beta-alanine. An ATP-binding site is contributed by 147–150 (GEKD). Gln-153 contributes to the (R)-pantoate binding site. ATP-binding positions include Ile-176 and 184 to 187 (LSSR).

This sequence belongs to the pantothenate synthetase family. As to quaternary structure, homodimer.

It localises to the cytoplasm. The catalysed reaction is (R)-pantoate + beta-alanine + ATP = (R)-pantothenate + AMP + diphosphate + H(+). The protein operates within cofactor biosynthesis; (R)-pantothenate biosynthesis; (R)-pantothenate from (R)-pantoate and beta-alanine: step 1/1. Catalyzes the condensation of pantoate with beta-alanine in an ATP-dependent reaction via a pantoyl-adenylate intermediate. In Porphyromonas gingivalis (strain ATCC BAA-308 / W83), this protein is Pantothenate synthetase.